Consider the following 377-residue polypeptide: EPS I polysaccharide export outer membrane protein EpsA (377 aa).

Positions 1–23 (MFVSIPSIRKTVMSLCAVPLMAA) are cleaved as a signal peptide. Cys-24 is lipidated: N-palmitoyl cysteine. Cys-24 carries S-diacylglycerol cysteine lipidation.

The protein belongs to the BexD/CtrA/VexA family.

The protein localises to the cell outer membrane. In terms of biological role, probably involved in polymerization and/or export of exopolysaccharide EPS I which functions as a virulence factor. This is EPS I polysaccharide export outer membrane protein EpsA (epsA) from Ralstonia solanacearum (Pseudomonas solanacearum).